The sequence spans 602 residues: SAGA complex subunit SPT8 (602 aa).

A disordered region spans residues 1–141 (MDEVDDILIN…REASSSTHEA (141 aa)). 2 stretches are compositionally biased toward acidic residues: residues 14–23 (VDDEEDDEEM) and 36–75 (EGNDDGGEDEEDDDDDDEDDDDDEDEREDDDEQEDDDGED). T85 carries the post-translational modification Phosphothreonine. 3 positions are modified to phosphoserine: S108, S123, and S131. WD repeat units lie at residues 173–212 (PIQTHVNALAVSRGLKYLFLGGSDGYIRKYDLLNTLEGKL) and 305–346 (GHTQ…NEFK). The tract at residues 366–418 (VSGNVNSGKENENADDDMDSLFGDEDEDEKQDAGNEPVETGDGSNGEENKEQI) is disordered. Positions 378 to 395 (NADDDMDSLFGDEDEDEK) are enriched in acidic residues. WD repeat units follow at residues 415 to 454 (KEQISEESLNIVYDESVFMTSGLNGSVHIWDRRMTQSPAL), 506 to 544 (SISGPVSCVKAMPNNKHLLCASRDNIRLYNVEIAVDASN), and 560 to 600 (HHGG…YDID). Residue S451 is modified to Phosphoserine.

Belongs to the WD repeat SPT8 family. Component of the 1.8 MDa SAGA (Spt-Ada-Gcn5 acetyltransferase) complex, which is composed of 19 subunits TRA1, SPT7, TAF5, NGG1/ADA3, SGF73, SPT20/ADA5, SPT8, TAF12, TAF6, HFI1/ADA1, UBP8, GCN5, ADA2, SPT3, SGF29, TAF10, TAF9, SGF11 and SUS1. The SAGA complex is composed of 4 modules, namely the HAT (histone acetyltransferase) module (GCN5, ADA2, NGG1/ADA3 and SGF29), the DUB (deubiquitinating) module (UBP8, SGF11, SGF73 and SUS1), the core or TAF (TBP-associated factor) module (TAF5, TAF6, TAF9, TAF10 and TAF12), and the Tra1 or SPT (Suppressor of Ty) module (TRA1, HFI1/ADA1, SPT3, SPT7, SPT8 and SPT20/ADA5). The Tra1/SPT module binds activators, the core module recruits TBP (TATA-binding protein), the HAT module contains the histone H3 acetyltransferase GCN5, and the DUB module comprises the histone H2B deubiquitinase UBP8.

The protein resides in the nucleus. Its function is as follows. Component of the transcription coactivator SAGA complex. SAGA acts as a general cofactor required for essentially all RNA polymerase II transcription. At the promoters, SAGA is required for transcription pre-initiation complex (PIC) recruitment. It influences RNA polymerase II transcriptional activity through different activities such as TBP interaction (via core/TAF module) and promoter selectivity, interaction with transcription activators (via Tra1/SPT module), and chromatin modification through histone acetylation (via HAT module) and deubiquitination (via DUB module). SAGA preferentially acetylates histones H3 (to form H3K9ac, H3K14ac, H3K18ac and H3K23ac) and H2B and deubiquitinates histone H2B. SAGA interacts with DNA via upstream activating sequences (UASs). During SAGA-mediated transcriptional inhibition, SPT3 and SPT8 prevent binding of TBP to the TATA box. In Saccharomyces cerevisiae (strain ATCC 204508 / S288c) (Baker's yeast), this protein is SAGA complex subunit SPT8 (SPT8).